The following is a 133-amino-acid chain: Large ribosomal subunit protein eL14 (133 aa).

The protein belongs to the eukaryotic ribosomal protein eL14 family.

The protein is Large ribosomal subunit protein eL14 of Pisum sativum (Garden pea).